Consider the following 241-residue polypeptide: Ribulose-phosphate 3-epimerase 1 (241 aa).

Ser-21 contributes to the substrate binding site. 3 residues coordinate a divalent metal cation: His-46, Asp-48, and His-79. The active-site Proton acceptor is the Asp-48. Residues His-79, 155 to 158, 192 to 194, and 214 to 215 contribute to the substrate site; these read GFGG, DGG, and GS. Residue Asp-192 participates in a divalent metal cation binding. Asp-192 (proton donor) is an active-site residue.

It belongs to the ribulose-phosphate 3-epimerase family. A divalent metal cation serves as cofactor.

It carries out the reaction D-ribulose 5-phosphate = D-xylulose 5-phosphate. It participates in carbohydrate degradation. In terms of biological role, catalyzes the reversible epimerization of D-ribulose 5-phosphate to D-xylulose 5-phosphate. In Cupriavidus necator (strain ATCC 17699 / DSM 428 / KCTC 22496 / NCIMB 10442 / H16 / Stanier 337) (Ralstonia eutropha), this protein is Ribulose-phosphate 3-epimerase 1.